The sequence spans 61 residues: Small ribosomal subunit protein uS14 (61 aa).

4 residues coordinate Zn(2+): Cys-24, Cys-27, Cys-40, and Cys-43.

The protein belongs to the universal ribosomal protein uS14 family. Zinc-binding uS14 subfamily. As to quaternary structure, part of the 30S ribosomal subunit. Contacts proteins S3 and S10. It depends on Zn(2+) as a cofactor.

In terms of biological role, binds 16S rRNA, required for the assembly of 30S particles and may also be responsible for determining the conformation of the 16S rRNA at the A site. The polypeptide is Small ribosomal subunit protein uS14 (Bifidobacterium adolescentis (strain ATCC 15703 / DSM 20083 / NCTC 11814 / E194a)).